The chain runs to 417 residues: Gamma-glutamyl phosphate reductase (417 aa).

Belongs to the gamma-glutamyl phosphate reductase family.

The protein resides in the cytoplasm. It carries out the reaction L-glutamate 5-semialdehyde + phosphate + NADP(+) = L-glutamyl 5-phosphate + NADPH + H(+). The protein operates within amino-acid biosynthesis; L-proline biosynthesis; L-glutamate 5-semialdehyde from L-glutamate: step 2/2. In terms of biological role, catalyzes the NADPH-dependent reduction of L-glutamate 5-phosphate into L-glutamate 5-semialdehyde and phosphate. The product spontaneously undergoes cyclization to form 1-pyrroline-5-carboxylate. In Streptococcus agalactiae serotype III (strain NEM316), this protein is Gamma-glutamyl phosphate reductase.